A 27-amino-acid chain; its full sequence is Larval-specific very high density lipoprotein (27 aa).

In terms of assembly, homodimer. As to expression, hemolymph.

It is found in the secreted. Its subcellular location is the extracellular space. Its function is as follows. Unknown (it might play a role in lipid transport and/or storage protein metabolism during metamorphosis). This is Larval-specific very high density lipoprotein from Apis mellifera (Honeybee).